A 343-amino-acid chain; its full sequence is Selenide, water dikinase (343 aa).

Sec-13 is an active-site residue. Residue Sec-13 is a non-standard amino acid, selenocysteine. ATP is bound by residues Lys-16 and 44-46 (TAD). Mg(2+) is bound at residue Asp-47. ATP is bound by residues Asp-64, Asp-87, and 135-137 (GHT). Mg(2+) is bound at residue Asp-87. Position 223 (Asp-223) interacts with Mg(2+).

Belongs to the selenophosphate synthase 1 family. Class I subfamily. Homodimer. Mg(2+) serves as cofactor.

It catalyses the reaction hydrogenselenide + ATP + H2O = selenophosphate + AMP + phosphate + 2 H(+). Functionally, synthesizes selenophosphate from selenide and ATP. The protein is Selenide, water dikinase of Geobacter metallireducens (strain ATCC 53774 / DSM 7210 / GS-15).